The primary structure comprises 199 residues: Recombination protein RecR (199 aa).

The C4-type zinc finger occupies 57-72; the sequence is CSICGNITEDDPCDIC. Residues 80–176 enclose the Toprim domain; it reads KAVLVVEDSK…KVTRLAHGLS (97 aa).

It belongs to the RecR family.

May play a role in DNA repair. It seems to be involved in an RecBC-independent recombinational process of DNA repair. It may act with RecF and RecO. This Pediococcus pentosaceus (strain ATCC 25745 / CCUG 21536 / LMG 10740 / 183-1w) protein is Recombination protein RecR.